A 377-amino-acid chain; its full sequence is 3-dehydroquinate synthase (377 aa).

Residues 115-119 (GVIGD), 139-140 (TS), K152, and K161 contribute to the NAD(+) site. 3 residues coordinate Zn(2+): E194, H256, and H275.

Belongs to the sugar phosphate cyclases superfamily. Dehydroquinate synthase family. It depends on NAD(+) as a cofactor. Requires Co(2+) as cofactor. The cofactor is Zn(2+).

Its subcellular location is the cytoplasm. It carries out the reaction 7-phospho-2-dehydro-3-deoxy-D-arabino-heptonate = 3-dehydroquinate + phosphate. It functions in the pathway metabolic intermediate biosynthesis; chorismate biosynthesis; chorismate from D-erythrose 4-phosphate and phosphoenolpyruvate: step 2/7. Catalyzes the conversion of 3-deoxy-D-arabino-heptulosonate 7-phosphate (DAHP) to dehydroquinate (DHQ). The polypeptide is 3-dehydroquinate synthase (Rhizobium meliloti (strain 1021) (Ensifer meliloti)).